A 240-amino-acid chain; its full sequence is 1-(5-phosphoribosyl)-5-[(5-phosphoribosylamino)methylideneamino] imidazole-4-carboxamide isomerase (240 aa).

Asp-8 acts as the Proton acceptor in catalysis. Asp-129 functions as the Proton donor in the catalytic mechanism.

The protein belongs to the HisA/HisF family.

Its subcellular location is the cytoplasm. It carries out the reaction 1-(5-phospho-beta-D-ribosyl)-5-[(5-phospho-beta-D-ribosylamino)methylideneamino]imidazole-4-carboxamide = 5-[(5-phospho-1-deoxy-D-ribulos-1-ylimino)methylamino]-1-(5-phospho-beta-D-ribosyl)imidazole-4-carboxamide. Its pathway is amino-acid biosynthesis; L-histidine biosynthesis; L-histidine from 5-phospho-alpha-D-ribose 1-diphosphate: step 4/9. The sequence is that of 1-(5-phosphoribosyl)-5-[(5-phosphoribosylamino)methylideneamino] imidazole-4-carboxamide isomerase from Listeria monocytogenes serotype 4b (strain CLIP80459).